The primary structure comprises 307 residues: MAGRSGRTFPRVAVLMGGTSSEREVSLSSGHSCSAALRDAGYEVTEVDAGPDLARVLAEVQPDAVFNALHGRWGEDGCVQGLLEWLRIPYTHSGVLASALAMDKARAKEVFAAAGLPVTQSVIATPDEVQAGHVLPPPYVVKPNCEGSSVGVYIVQADANGPPRLAPDMPRDLMVETYIPGRELTVTVMGDRALAVTDIVTDGWYDYDAKYRPGGSRHVVPAELPAEITDACLDIALRAHRALGCRGISRSDLRWDESRGAEGLILLETNTQPGMTPTSLSPEQAAHCGLSFPEFCAWMVEDASCNR.

Residues 108–301 form the ATP-grasp domain; sequence KEVFAAAGLP…FPEFCAWMVE (194 aa). 135 to 185 serves as a coordination point for ATP; that stretch reads LPPPYVVKPNCEGSSVGVYIVQADANGPPRLAPDMPRDLMVETYIPGRELT. The Mg(2+) site is built by aspartate 252, glutamate 268, and asparagine 270.

The protein belongs to the D-alanine--D-alanine ligase family. The cofactor is Mg(2+). Requires Mn(2+) as cofactor.

Its subcellular location is the cytoplasm. The enzyme catalyses 2 D-alanine + ATP = D-alanyl-D-alanine + ADP + phosphate + H(+). Its pathway is cell wall biogenesis; peptidoglycan biosynthesis. Functionally, cell wall formation. The polypeptide is D-alanine--D-alanine ligase (Cereibacter sphaeroides (strain ATCC 17025 / ATH 2.4.3) (Rhodobacter sphaeroides)).